Here is a 29-residue protein sequence, read N- to C-terminus: Cyclotide psyleio C (29 aa).

Positions 1–29 (GDLPVCGETCFGGTCNTPGCVCAWPVCTR) form a cross-link, cyclopeptide (Gly-Arg). Disulfide bonds link cysteine 6/cysteine 20, cysteine 10/cysteine 22, and cysteine 15/cysteine 27.

This is a cyclic peptide.

Functionally, probably participates in a plant defense mechanism. The chain is Cyclotide psyleio C from Psychotria leiocarpa.